The sequence spans 206 residues: Regulatory protein CysR (206 aa).

Positions 120 to 196 (RRAEAKLASL…DRALIVRYPE (77 aa)) constitute an HTH crp-type domain. Residues 156-175 (HQVIAELSGSTRVTTTRLLG) constitute a DNA-binding region (H-T-H motif).

Its subcellular location is the cytoplasm. In terms of biological role, probably regulates the expression of genes from the sulfate permease complex. The polypeptide is Regulatory protein CysR (cysR) (Synechococcus elongatus (strain ATCC 33912 / PCC 7942 / FACHB-805) (Anacystis nidulans R2)).